Reading from the N-terminus, the 83-residue chain is Putative beta-neurotoxin RjAa15f (83 aa).

Residues 1–18 form the signal peptide; the sequence is MKILIFIIASFMLIGVEC. One can recognise an LCN-type CS-alpha/beta domain in the interval 19–82; sequence KEGYPMGRNG…VWDSSNNKCV (64 aa). Disulfide bonds link cysteine 29-cysteine 81, cysteine 33-cysteine 55, cysteine 40-cysteine 62, and cysteine 44-cysteine 64.

It belongs to the long (4 C-C) scorpion toxin superfamily. Sodium channel inhibitor family. Beta subfamily. In terms of tissue distribution, expressed by the venom gland.

It localises to the secreted. Its function is as follows. Beta toxins bind voltage-independently at site-4 of sodium channels (Nav) and shift the voltage of activation toward more negative potentials thereby affecting sodium channel activation and promoting spontaneous and repetitive firing. In Rhopalurus junceus (Caribbean blue scorpion), this protein is Putative beta-neurotoxin RjAa15f.